Here is a 101-residue protein sequence, read N- to C-terminus: Ribonuclease kappa-B (101 aa).

2 helical membrane passes run 13 to 33 (ACGI…GIFF) and 68 to 88 (VGIN…VSLC).

It belongs to the RNase K family.

The protein resides in the membrane. Endoribonuclease which preferentially cleaves ApU and ApG phosphodiester bonds. This is Ribonuclease kappa-B (rnasekb) from Danio rerio (Zebrafish).